Consider the following 117-residue polypeptide: UPF0342 protein Bcer98_0695 (117 aa).

The protein belongs to the UPF0342 family.

The sequence is that of UPF0342 protein Bcer98_0695 from Bacillus cytotoxicus (strain DSM 22905 / CIP 110041 / 391-98 / NVH 391-98).